A 214-amino-acid chain; its full sequence is Anti-sigma-F factor NrsF (214 aa).

Residues 1-25 (MRTDDLIDALAADAGRGTEPAPPRR) lie on the Cytoplasmic side of the membrane. A helical membrane pass occupies residues 26–46 (LALVAGLGGVAALLLVLGWLQ). Over 47–53 (ARPDLGQ) the chain is Periplasmic. Residues 54–74 (AILGPMFWVKAIYTGLLGLAG) form a helical membrane-spanning segment. The Cytoplasmic segment spans residues 75 to 90 (YLAVERLSRPGGSGRR). Residues 91-111 (GWIIGAVVFGACAVAGIYQAI) traverse the membrane as a helical segment. Residues 112–134 (TSPDVQAALKLLHGYSWRSCSPR) are Periplasmic-facing. A helical transmembrane segment spans residues 135–155 (ILVLGLPMLALGLWALRGMAP). The Cytoplasmic portion of the chain corresponds to 156–158 (TRP). The chain crosses the membrane as a helical span at residues 159-179 (GLAGFAMGLFSGGVVATLYGL). Topologically, residues 180 to 185 (HCPEHT) are periplasmic. The chain crosses the membrane as a helical span at residues 186-206 (FTFLALWYSLGVLALGLIGGW). The Cytoplasmic portion of the chain corresponds to 207 to 214 (AGRWLLRW).

The protein belongs to the NrsF anti-sigma-F factor family.

The protein localises to the cell inner membrane. An anti-sigma factor for extracytoplasmic function (ECF) sigma factor sigma-F (SigF), which responds to chromate and cadmium. Overexpression leads to loss of response to dichromate. ECF sigma factors are held in an inactive form by a cognate anti-sigma factor. This Caulobacter vibrioides (strain NA1000 / CB15N) (Caulobacter crescentus) protein is Anti-sigma-F factor NrsF.